We begin with the raw amino-acid sequence, 337 residues long: 4-hydroxyproline 2-epimerase (337 aa).

Catalysis depends on C91, which acts as the Proton acceptor. Substrate contacts are provided by residues 92-93 (GH), D252, and 257-258 (GT).

Belongs to the proline racemase family.

It carries out the reaction trans-4-hydroxy-L-proline = cis-4-hydroxy-D-proline. Functionally, catalyzes the epimerization of trans-4-hydroxy-L-proline (t4LHyp) to cis-4-hydroxy-D-proline (c4DHyp). Is involved in a degradation pathway that converts t4LHyp to alpha-ketoglutarate, which allows R.sphaeroides to grow on t4LHyp as a sole carbon source. Displays no proline racemase activity. The chain is 4-hydroxyproline 2-epimerase from Cereibacter sphaeroides (strain ATCC 17023 / DSM 158 / JCM 6121 / CCUG 31486 / LMG 2827 / NBRC 12203 / NCIMB 8253 / ATH 2.4.1.) (Rhodobacter sphaeroides).